Consider the following 254-residue polypeptide: 5-oxoprolinase subunit A (254 aa).

It belongs to the LamB/PxpA family. As to quaternary structure, forms a complex composed of PxpA, PxpB and PxpC.

It catalyses the reaction 5-oxo-L-proline + ATP + 2 H2O = L-glutamate + ADP + phosphate + H(+). In terms of biological role, catalyzes the cleavage of 5-oxoproline to form L-glutamate coupled to the hydrolysis of ATP to ADP and inorganic phosphate. In Burkholderia mallei (strain NCTC 10247), this protein is 5-oxoprolinase subunit A.